Here is a 156-residue protein sequence, read N- to C-terminus: Deoxyuridine 5'-triphosphate nucleotidohydrolase (156 aa).

Belongs to the dCTP deaminase family. Archaeal dUTPase subfamily. As to quaternary structure, homotrimer.

The enzyme catalyses dUTP + H2O = dUMP + diphosphate + H(+). It participates in pyrimidine metabolism; dUMP biosynthesis; dUMP from dCTP (dUTP route): step 2/2. In terms of biological role, this enzyme is involved in nucleotide metabolism: it produces dUMP, the immediate precursor of thymidine nucleotides and it decreases the intracellular concentration of dUTP so that uracil cannot be incorporated into DNA. The sequence is that of Deoxyuridine 5'-triphosphate nucleotidohydrolase from Methanocaldococcus jannaschii (strain ATCC 43067 / DSM 2661 / JAL-1 / JCM 10045 / NBRC 100440) (Methanococcus jannaschii).